Reading from the N-terminus, the 388-residue chain is L-cysteine desulfidase (388 aa).

Residue C25 is the Proton acceptor of the active site. Positions 282, 322, and 329 each coordinate [4Fe-4S] cluster.

This sequence belongs to the L-cysteine desulfidase family. Homotrimer. [4Fe-4S] cluster is required as a cofactor.

The catalysed reaction is L-cysteine + H2O = hydrogen sulfide + pyruvate + NH4(+) + H(+). In terms of biological role, catalyzes the cleavage of L-cysteine to form 2-aminoprop-2-enoate and sulfide. The former then spontaneously hydrolyzes to pyruvate and NH(3). May be responsible for the production of sulfide required for the biosynthesis of iron-sulfur centers in this archaea. Is very specific for L-cysteine, with no activity being detected with D-cysteine, L-homocysteine, 3-mercaptopropionate (cysteine without the amino group), cysteamine (cysteine without the carboxylate), or mercaptolactate (the hydroxyl analog of cysteine). This chain is L-cysteine desulfidase, found in Methanocaldococcus jannaschii (strain ATCC 43067 / DSM 2661 / JAL-1 / JCM 10045 / NBRC 100440) (Methanococcus jannaschii).